A 96-amino-acid polypeptide reads, in one-letter code: Aspartyl/glutamyl-tRNA(Asn/Gln) amidotransferase subunit C (96 aa).

It belongs to the GatC family. As to quaternary structure, heterotrimer of A, B and C subunits.

It carries out the reaction L-glutamyl-tRNA(Gln) + L-glutamine + ATP + H2O = L-glutaminyl-tRNA(Gln) + L-glutamate + ADP + phosphate + H(+). The catalysed reaction is L-aspartyl-tRNA(Asn) + L-glutamine + ATP + H2O = L-asparaginyl-tRNA(Asn) + L-glutamate + ADP + phosphate + 2 H(+). Allows the formation of correctly charged Asn-tRNA(Asn) or Gln-tRNA(Gln) through the transamidation of misacylated Asp-tRNA(Asn) or Glu-tRNA(Gln) in organisms which lack either or both of asparaginyl-tRNA or glutaminyl-tRNA synthetases. The reaction takes place in the presence of glutamine and ATP through an activated phospho-Asp-tRNA(Asn) or phospho-Glu-tRNA(Gln). The protein is Aspartyl/glutamyl-tRNA(Asn/Gln) amidotransferase subunit C of Aliarcobacter butzleri (strain RM4018) (Arcobacter butzleri).